We begin with the raw amino-acid sequence, 96 residues long: DNA-directed RNA polymerase subunit Rpo11 (96 aa).

This sequence belongs to the archaeal Rpo11/eukaryotic RPB11/RPC19 RNA polymerase subunit family. In terms of assembly, part of the RNA polymerase complex.

Its subcellular location is the cytoplasm. It catalyses the reaction RNA(n) + a ribonucleoside 5'-triphosphate = RNA(n+1) + diphosphate. In terms of biological role, DNA-dependent RNA polymerase (RNAP) catalyzes the transcription of DNA into RNA using the four ribonucleoside triphosphates as substrates. In Methanococcus maripaludis (strain C6 / ATCC BAA-1332), this protein is DNA-directed RNA polymerase subunit Rpo11.